Consider the following 299-residue polypeptide: Acetaldehyde dehydrogenase (299 aa).

Position 11-14 (11-14) interacts with NAD(+); that stretch reads SGNI. Catalysis depends on Cys-126, which acts as the Acyl-thioester intermediate. Residues 157-165 and Asn-267 contribute to the NAD(+) site; that span reads SAGPGTRAN.

The protein belongs to the acetaldehyde dehydrogenase family.

The enzyme catalyses acetaldehyde + NAD(+) + CoA = acetyl-CoA + NADH + H(+). This chain is Acetaldehyde dehydrogenase, found in Bacillus thuringiensis (strain Al Hakam).